The sequence spans 1370 residues: Insulin-like growth factor 1 receptor (1370 aa).

An N-terminal signal peptide occupies residues Met-1–Gly-30. Cys-33 and Cys-52 are disulfide-bonded. 3 N-linked (GlcNAc...) asparagine glycosylation sites follow: Asn-51, Asn-102, and Asn-135. Cystine bridges form between Cys-150/Cys-178, Cys-182/Cys-205, Cys-192/Cys-211, Cys-215/Cys-224, Cys-219/Cys-230, Cys-231/Cys-239, Cys-235/Cys-248, Cys-251/Cys-260, Cys-264/Cys-276, Cys-282/Cys-303, Cys-307/Cys-321, Cys-324/Cys-328, and Cys-332/Cys-354. Asn-245 carries N-linked (GlcNAc...) asparagine glycosylation. Asn-314 carries an N-linked (GlcNAc...) asparagine glycan. N-linked (GlcNAc...) asparagine glycosylation is found at Asn-418 and Asn-439. A disulfide bridge connects residues Cys-456 and Cys-489. 2 consecutive Fibronectin type-III domains span residues Glu-490–Ser-610 and Val-611–Glu-709. N-linked (GlcNAc...) asparagine glycans are attached at residues Asn-535, Asn-608, Asn-623, Asn-641, Asn-748, Asn-757, Asn-765, Asn-901, and Asn-914. Residues Asp-742–His-936 are Extracellular-facing. Residues Ile-835–Lys-928 form the Fibronectin type-III 3 domain. Residues Leu-937–His-960 traverse the membrane as a helical segment. Residues Arg-961 to Cys-1370 lie on the Cytoplasmic side of the membrane. Positions Asn-978–Tyr-981 match the IRS1- and SHC1-binding motif. Tyr-981 bears the Phosphotyrosine mark. Residues Ile-1000–Phe-1275 form the Protein kinase domain. Residues Leu-1006–Val-1014 and Lys-1034 each bind ATP. The active-site Proton acceptor is the Asp-1136. Tyr-1162, Tyr-1166, and Tyr-1167 each carry phosphotyrosine; by autocatalysis. Glycyl lysine isopeptide (Lys-Gly) (interchain with G-Cter in ubiquitin) cross-links involve residues Lys-1169 and Lys-1172. A Phosphoserine; by GSK3-beta modification is found at Ser-1279. Ser-1283 is modified (phosphoserine). The interval Asn-1304–Cys-1370 is disordered. A compositionally biased stretch (low complexity) spans Met-1305–Leu-1321. The span at Pro-1322–Glu-1331 shows a compositional bias: basic and acidic residues.

This sequence belongs to the protein kinase superfamily. Tyr protein kinase family. Insulin receptor subfamily. In terms of assembly, tetramer of 2 alpha and 2 beta chains linked by disulfide bonds. The alpha chains contribute to the formation of the ligand-binding domain, while the beta chain carries the kinase domain. Interacts with PIK3R1 and with the PTB/PID domains of IRS1 and SHC1 in vitro when autophosphorylated on tyrosine residues. Forms a hybrid receptor with INSR, the hybrid is a tetramer consisting of 1 alpha chain and 1 beta chain of INSR and 1 alpha chain and 1 beta chain of IGF1R. Interacts with ARRB1 and ARRB2. Interacts with GRB10. Interacts with RACK1. Interacts with SOCS1, SOCS2 and SOCS3. Interacts with 14-3-3 proteins. Interacts with NMD2. Interacts with MAP3K5. Interacts with STAT3. Found in a ternary complex with IGF1 and ITGAV:ITGB3 or ITGA6:ITGB4. Interacts (nascent precursor form) with ZFAND2B. Post-translationally, autophosphorylated on tyrosine residues in response to ligand binding. Autophosphorylation occurs in trans, i.e. one subunit of the dimeric receptor phosphorylates tyrosine residues on the other subunit. Autophosphorylation occurs in a sequential manner; Tyr-1166 is predominantly phosphorylated first, followed by phosphorylation of Tyr-1162 and Tyr-1167. While every single phosphorylation increases kinase activity, all three tyrosine residues in the kinase activation loop (Tyr-1162, Tyr-1166 and Tyr-1167) have to be phosphorylated for optimal activity. Can be autophosphorylated at additional tyrosine residues (in vitro). Autophosphorylated is followed by phosphorylation of juxtamembrane tyrosines and C-terminal serines. May also be phosphorylated at Tyr-1162 and Tyr-1167 by mTORC2. Phosphorylation of Tyr-981 is required for IRS1- and SHC1-binding. Phosphorylation of Ser-1279 by GSK-3beta restrains kinase activity and promotes cell surface expression, it requires a priming phosphorylation at Ser-1283. Dephosphorylated by PTPN1. Polyubiquitinated at Lys-1169 and Lys-1172 through both 'Lys-48' and 'Lys-29' linkages, promoting receptor endocytosis and subsequent degradation by the proteasome. Ubiquitination is facilitated by pre-existing phosphorylation. In terms of processing, sumoylated with SUMO1. Post-translationally, controlled by regulated intramembrane proteolysis (RIP). Undergoes metalloprotease-dependent constitutive ectodomain shedding to produce a membrane-anchored 52 kDa C-Terminal fragment which is further processed by presenilin gamma-secretase to yield an intracellular 50 kDa fragment.

Its subcellular location is the cell membrane. The enzyme catalyses L-tyrosyl-[protein] + ATP = O-phospho-L-tyrosyl-[protein] + ADP + H(+). Its activity is regulated as follows. Activated by autophosphorylation at Tyr-1162, Tyr-1166 and Tyr-1167 on the kinase activation loop; phosphorylation at all three tyrosine residues is required for optimal kinase activity. Inhibited by MSC1609119A-1, BMS-754807, PQIP, benzimidazole pyridinone, isoquinolinedione, bis-azaindole, 3-cyanoquinoline, 2,4-bis-arylamino-1,3-pyrimidine, pyrrolopyrimidine, pyrrole-5-carboxaldehyde, picropodophyllin (PPP), tyrphostin derivatives. While most inhibitors bind to the ATP binding pocket, MSC1609119A-1 functions as allosteric inhibitor and binds close to the DFG motif and the activation loop. Dephosphorylated by PTPN1. In terms of biological role, receptor tyrosine kinase which mediates actions of insulin-like growth factor 1 (IGF1). Binds IGF1 with high affinity and IGF2 and insulin (INS) with a lower affinity. The activated IGF1R is involved in cell growth and survival control. IGF1R is crucial for tumor transformation and survival of malignant cell. Ligand binding activates the receptor kinase, leading to receptor autophosphorylation, and tyrosines phosphorylation of multiple substrates, that function as signaling adapter proteins including, the insulin-receptor substrates (IRS1/2), Shc and 14-3-3 proteins. Phosphorylation of IRSs proteins lead to the activation of two main signaling pathways: the PI3K-AKT/PKB pathway and the Ras-MAPK pathway. The result of activating the MAPK pathway is increased cellular proliferation, whereas activating the PI3K pathway inhibits apoptosis and stimulates protein synthesis. Phosphorylated IRS1 can activate the 85 kDa regulatory subunit of PI3K (PIK3R1), leading to activation of several downstream substrates, including protein AKT/PKB. AKT phosphorylation, in turn, enhances protein synthesis through mTOR activation and triggers the antiapoptotic effects of IGFIR through phosphorylation and inactivation of BAD. In parallel to PI3K-driven signaling, recruitment of Grb2/SOS by phosphorylated IRS1 or Shc leads to recruitment of Ras and activation of the ras-MAPK pathway. In addition to these two main signaling pathways IGF1R signals also through the Janus kinase/signal transducer and activator of transcription pathway (JAK/STAT). Phosphorylation of JAK proteins can lead to phosphorylation/activation of signal transducers and activators of transcription (STAT) proteins. In particular activation of STAT3, may be essential for the transforming activity of IGF1R. The JAK/STAT pathway activates gene transcription and may be responsible for the transforming activity. JNK kinases can also be activated by the IGF1R. IGF1 exerts inhibiting activities on JNK activation via phosphorylation and inhibition of MAP3K5/ASK1, which is able to directly associate with the IGF1R. When present in a hybrid receptor with INSR, binds IGF1. This is Insulin-like growth factor 1 receptor (Igf1r) from Rattus norvegicus (Rat).